Reading from the N-terminus, the 488-residue chain is Ribulose bisphosphate carboxylase large chain (488 aa).

Substrate contacts are provided by Asn-127 and Thr-177. The active-site Proton acceptor is Lys-179. Lys-181 is a binding site for substrate. The Mg(2+) site is built by Lys-205, Asp-207, and Glu-208. Position 205 is an N6-carboxylysine (Lys-205). The Proton acceptor role is filled by His-297. 3 residues coordinate substrate: Arg-298, His-330, and Ser-382.

Belongs to the RuBisCO large chain family. Type I subfamily. Heterohexadecamer of 8 large chains and 8 small chains. The cofactor is Mg(2+).

It localises to the plastid. Its subcellular location is the chloroplast. It catalyses the reaction 2 (2R)-3-phosphoglycerate + 2 H(+) = D-ribulose 1,5-bisphosphate + CO2 + H2O. The enzyme catalyses D-ribulose 1,5-bisphosphate + O2 = 2-phosphoglycolate + (2R)-3-phosphoglycerate + 2 H(+). RuBisCO catalyzes two reactions: the carboxylation of D-ribulose 1,5-bisphosphate, the primary event in carbon dioxide fixation, as well as the oxidative fragmentation of the pentose substrate in the photorespiration process. Both reactions occur simultaneously and in competition at the same active site. The chain is Ribulose bisphosphate carboxylase large chain from Chrysotila carterae (Marine alga).